The following is a 147-amino-acid chain: Hemoglobin subunit delta (147 aa).

One can recognise a Globin domain in the interval 3–147; it reads NLTAAEKTQV…VANALAHKYH (145 aa). Residues histidine 64 and histidine 93 each coordinate heme b.

It belongs to the globin family. Heterotetramer of two delta chains and two alpha chains. In terms of tissue distribution, red blood cells.

The sequence is that of Hemoglobin subunit delta (HBD) from Loxodonta africana (African elephant).